The sequence spans 563 residues: Efflux pump notK (563 aa).

Residues 1 to 32 (MTKDEDSGTTDGGYSTPDIAVQEKQDQPPAPE) are disordered. 14 helical membrane-spanning segments follow: residues 48 to 68 (IFLSTLLAALDIGIVATAIPG), 78 to 98 (DVGWYGGACFLLVGSSAPMWG), 108 to 128 (LVYLVSVVIFLVGSIVAAAAP), 138 to 158 (ALQGWGCSGTLGGSVLMISYV), 165 to 185 (AMLIGMWMSVFMFSTIIGPLL), 197 to 217 (WCFWINLPVGGPVIALVVLFF), 239 to 259 (LPGFALLLTSLVCLTVALQWG), 270 to 290 (VIATLVMWVVLTIAFFVVEWI), 312 to 332 (LYGWIANLANFQVLFYLPIYF), 345 to 365 (VNSLPFMAFFAAGSMLSGFLI), 374 to 394 (YEFASGVLATVGAALLYTLDI), 406 to 426 (VIFGIGIGLGNQVPMTALESF), 438 to 458 (VMLMCNSISGAYFVTAAQSIF), and 509 to 529 (VFAFSLAGAAFTVVLSLAIPF). The disordered stretch occupies residues 538-563 (GPSNGQEEEEGKKDGPAEKKEDEVAV). The span at 547 to 563 (EGKKDGPAEKKEDEVAV) shows a compositional bias: basic and acidic residues.

Belongs to the major facilitator superfamily. TCR/Tet family.

The protein resides in the cell membrane. In terms of biological role, efflux pump; part of the gene cluster that mediates the biosynthesis of notoamide, a fungal indole alkaloid that belongs to a family of natural products containing a characteristic bicyclo[2.2.2]diazaoctane core. This Aspergillus sp. (strain MF297-2) protein is Efflux pump notK.